Here is a 206-residue protein sequence, read N- to C-terminus: MNHSEQPFDVKEALLFSQRMAQLSKALWKSIEKDWQQWIKPYNLNINEHHILWIAYQLKGASISEIAKFGVMHVSTAFNFSKKLEERGFLKFSKKLNDKRNTYIELTPKGEETFHKLLEDYDPARTGIVKGAQPLHDIYGKFPEILEMMCIIRNIYGEDFMEIFEKSFSNIEKDFLNERGRVTKKSEELEDSADAAEKAAKANQIV.

Residues 13–157 (ALLFSQRMAQ…MMCIIRNIYG (145 aa)) enclose the HTH marR-type domain. A DNA-binding region (H-T-H motif) is located at residues 63–86 (ISEIAKFGVMHVSTAFNFSKKLEE). Positions 186–206 (SEELEDSADAAEKAAKANQIV) are disordered.

In terms of assembly, homodimer.

In terms of biological role, negative regulator of protease production and sporulation. The protein is HTH-type transcriptional regulator Hpr of Bacillus pumilus (strain SAFR-032).